Here is a 426-residue protein sequence, read N- to C-terminus: MATAAWLLGRRVASWRMRPPLQSLAGLITQRTNSLLPVDDAVNGLNEEQKQLRQTVAKFLQEHLAPQAQEIDQSNEFKNLREFWKQLGNLGVLGITAPVQYGGSGLGFLENVLVMEEISRVSGAVGLSYGAHSNLCINQIVRNGNETQKEKYLPKLISGEYIGALAMSEPNAGSDVVSMKLKAEKKGDHYVLNGNKFWITNGPDADVLVVYAKTDVTAVPASRGITAFIVEKGMPGFSTSKKLDKLGMRGSNTCELVFEDCEVPAANILGHLGKGVYVLMSGLDLERLVLAGGPLGIMQAVLDHTIPYLHMREAFGQKIGHFQLMQGKMADMYTRLMACRQYVYNVAKACDEGHCTTKDCAGVILYSAECATQVALDGIQCLGGNGYINDFPMGRFLRDAKLYEIGAGTSEVRRLVIGRAFNADFH.

Residues 1–32 constitute a mitochondrion transit peptide; that stretch reads MATAAWLLGRRVASWRMRPPLQSLAGLITQRT. 2 positions are modified to N6-acetyllysine; alternate: K58 and K78. 2 positions are modified to N6-succinyllysine; alternate: K58 and K78. FAD contacts are provided by residues 165 to 174 and 198 to 200; these read LAMSEPNAGS and WIT. S174 is a binding site for substrate. 222–223 contacts substrate; sequence SR. Position 241 is an N6-acetyllysine (K241). Substrate is bound by residues Y277 and 284–287; that span reads DLER. Catalysis depends on E286, which acts as the Proton acceptor. An FAD-binding site is contributed by R312. An N6-succinyllysine modification is found at K318. Residues Q323 and 380 to 384 contribute to the FAD site; that span reads QCLGG. 407–408 contacts substrate; sequence AG. 409-411 is an FAD binding site; that stretch reads TSE.

It belongs to the acyl-CoA dehydrogenase family. In terms of assembly, homotetramer. The cofactor is FAD.

It localises to the mitochondrion matrix. The enzyme catalyses 3-methylbutanoyl-CoA + oxidized [electron-transfer flavoprotein] + H(+) = 3-methylbut-2-enoyl-CoA + reduced [electron-transfer flavoprotein]. It carries out the reaction pentanoyl-CoA + oxidized [electron-transfer flavoprotein] + H(+) = (2E)-pentenoyl-CoA + reduced [electron-transfer flavoprotein]. It catalyses the reaction hexanoyl-CoA + oxidized [electron-transfer flavoprotein] + H(+) = (2E)-hexenoyl-CoA + reduced [electron-transfer flavoprotein]. The catalysed reaction is butanoyl-CoA + oxidized [electron-transfer flavoprotein] + H(+) = (2E)-butenoyl-CoA + reduced [electron-transfer flavoprotein]. The protein operates within amino-acid degradation; L-leucine degradation; (S)-3-hydroxy-3-methylglutaryl-CoA from 3-isovaleryl-CoA: step 1/3. Its function is as follows. Catalyzes the conversion of isovaleryl-CoA/3-methylbutanoyl-CoA to 3-methylbut-2-enoyl-CoA as an intermediate step in the leucine (Leu) catabolic pathway. To a lesser extent, is also able to catalyze the oxidation of other saturated short-chain acyl-CoA thioesters as pentanoyl-CoA, hexenoyl-CoA and butenoyl-CoA. The protein is Isovaleryl-CoA dehydrogenase, mitochondrial (IVD) of Bos taurus (Bovine).